We begin with the raw amino-acid sequence, 380 residues long: Succinyl-diaminopimelate desuccinylase (380 aa).

His-69 contacts Zn(2+). Residue Asp-71 is part of the active site. Zn(2+) is bound at residue Asp-102. Glu-135 (proton acceptor) is an active-site residue. Zn(2+) contacts are provided by Glu-136, Glu-164, and His-353.

This sequence belongs to the peptidase M20A family. DapE subfamily. In terms of assembly, homodimer. Requires Zn(2+) as cofactor. Co(2+) is required as a cofactor.

The enzyme catalyses N-succinyl-(2S,6S)-2,6-diaminopimelate + H2O = (2S,6S)-2,6-diaminopimelate + succinate. It participates in amino-acid biosynthesis; L-lysine biosynthesis via DAP pathway; LL-2,6-diaminopimelate from (S)-tetrahydrodipicolinate (succinylase route): step 3/3. Its function is as follows. Catalyzes the hydrolysis of N-succinyl-L,L-diaminopimelic acid (SDAP), forming succinate and LL-2,6-diaminopimelate (DAP), an intermediate involved in the bacterial biosynthesis of lysine and meso-diaminopimelic acid, an essential component of bacterial cell walls. The polypeptide is Succinyl-diaminopimelate desuccinylase (Cereibacter sphaeroides (strain KD131 / KCTC 12085) (Rhodobacter sphaeroides)).